The following is a 182-amino-acid chain: Peptide deformylase (182 aa).

Residues cysteine 110 and histidine 153 each contribute to the Fe cation site. Glutamate 154 is a catalytic residue. Histidine 157 provides a ligand contact to Fe cation.

It belongs to the polypeptide deformylase family. Requires Fe(2+) as cofactor.

It catalyses the reaction N-terminal N-formyl-L-methionyl-[peptide] + H2O = N-terminal L-methionyl-[peptide] + formate. Functionally, removes the formyl group from the N-terminal Met of newly synthesized proteins. Requires at least a dipeptide for an efficient rate of reaction. N-terminal L-methionine is a prerequisite for activity but the enzyme has broad specificity at other positions. In Halalkalibacterium halodurans (strain ATCC BAA-125 / DSM 18197 / FERM 7344 / JCM 9153 / C-125) (Bacillus halodurans), this protein is Peptide deformylase.